Consider the following 503-residue polypeptide: Transmembrane protein 184C (503 aa).

A run of 7 helical transmembrane segments spans residues 17–37 (LLIL…IWEF), 48–68 (VWFI…CGIL), 83–103 (IIRI…ALKY), 115–135 (ECYE…YLTI), 212–232 (YLVI…LLFY), 254–274 (VVFV…VGVI), and 287–307 (AVAT…AAIA). Disordered regions lie at residues 358–391 (PKKK…SPVG) and 479–503 (SPKP…STDS). Residues 373–388 (SSLLSASSQDSSKPSS) are compositionally biased toward low complexity. Residues 494 to 503 (PEGSDSSTDS) show a composition bias toward polar residues.

Belongs to the TMEM184 family.

It is found in the membrane. Possible tumor suppressor which may play a role in cell growth. The chain is Transmembrane protein 184C (Tmem184c) from Rattus norvegicus (Rat).